A 972-amino-acid chain; its full sequence is FHF complex subunit HOOK-interacting protein 1B (972 aa).

2 disordered regions span residues A465 to E548 and S573 to E644. S467 is subject to Phosphoserine. Over residues R478–R501 the composition is skewed to low complexity. Phosphoserine occurs at positions 510, 523, 529, and 533. A compositionally biased stretch (low complexity) spans S523–G535. Phosphoserine occurs at positions 859 and 897.

It belongs to the FHIP family. As to quaternary structure, component of the FTS/Hook/FHIP complex (FHF complex), composed of AKTIP/FTS, FHIP1B, and one or more members of the Hook family of proteins HOOK1, HOOK2, and HOOK3. The FHF complex associates with the homotypic vesicular sorting complex (the HOPS complex).

In terms of biological role, component of the FTS/Hook/FHIP complex (FHF complex). The FHF complex may function to promote vesicle trafficking and/or fusion via the homotypic vesicular protein sorting complex (the HOPS complex). FHF complex promotes the distribution of AP-4 complex to the perinuclear area of the cell. The sequence is that of FHF complex subunit HOOK-interacting protein 1B from Homo sapiens (Human).